Consider the following 312-residue polypeptide: tRNA pseudouridine synthase B (312 aa).

Asp46 serves as the catalytic Nucleophile. 3 residues coordinate substrate: Tyr74, Tyr177, and Leu198.

The protein belongs to the pseudouridine synthase TruB family. Type 1 subfamily.

The enzyme catalyses uridine(55) in tRNA = pseudouridine(55) in tRNA. In terms of biological role, responsible for synthesis of pseudouridine from uracil-55 in the psi GC loop of transfer RNAs. This is tRNA pseudouridine synthase B from Buchnera aphidicola subsp. Acyrthosiphon pisum (strain APS) (Acyrthosiphon pisum symbiotic bacterium).